The following is a 385-amino-acid chain: Queuine tRNA-ribosyltransferase (385 aa).

Asp-92 (proton acceptor) is an active-site residue. Residues 92-96 (DSGGF), Asp-146, Gln-188, and Gly-215 each bind substrate. Residues 246–252 (GVGHPED) form an RNA binding region. Asp-265 (nucleophile) is an active-site residue. Residues 270–274 (TRTGR) are RNA binding; important for wobble base 34 recognition. Zn(2+)-binding residues include Cys-303, Cys-305, Cys-308, and His-334.

It belongs to the queuine tRNA-ribosyltransferase family. In terms of assembly, homodimer. Within each dimer, one monomer is responsible for RNA recognition and catalysis, while the other monomer binds to the replacement base PreQ1. The cofactor is Zn(2+).

It carries out the reaction 7-aminomethyl-7-carbaguanine + guanosine(34) in tRNA = 7-aminomethyl-7-carbaguanosine(34) in tRNA + guanine. It functions in the pathway tRNA modification; tRNA-queuosine biosynthesis. Catalyzes the base-exchange of a guanine (G) residue with the queuine precursor 7-aminomethyl-7-deazaguanine (PreQ1) at position 34 (anticodon wobble position) in tRNAs with GU(N) anticodons (tRNA-Asp, -Asn, -His and -Tyr). Catalysis occurs through a double-displacement mechanism. The nucleophile active site attacks the C1' of nucleotide 34 to detach the guanine base from the RNA, forming a covalent enzyme-RNA intermediate. The proton acceptor active site deprotonates the incoming PreQ1, allowing a nucleophilic attack on the C1' of the ribose to form the product. After dissociation, two additional enzymatic reactions on the tRNA convert PreQ1 to queuine (Q), resulting in the hypermodified nucleoside queuosine (7-(((4,5-cis-dihydroxy-2-cyclopenten-1-yl)amino)methyl)-7-deazaguanosine). The sequence is that of Queuine tRNA-ribosyltransferase from Thermus thermophilus (strain ATCC BAA-163 / DSM 7039 / HB27).